A 285-amino-acid chain; its full sequence is tRNA pseudouridine synthase A (285 aa).

The active-site Nucleophile is the Asp-64. Tyr-125 lines the substrate pocket.

Belongs to the tRNA pseudouridine synthase TruA family. Homodimer.

It carries out the reaction uridine(38/39/40) in tRNA = pseudouridine(38/39/40) in tRNA. Its function is as follows. Formation of pseudouridine at positions 38, 39 and 40 in the anticodon stem and loop of transfer RNAs. The polypeptide is tRNA pseudouridine synthase A (Streptomyces avermitilis (strain ATCC 31267 / DSM 46492 / JCM 5070 / NBRC 14893 / NCIMB 12804 / NRRL 8165 / MA-4680)).